We begin with the raw amino-acid sequence, 248 residues long: 1-(5-phosphoribosyl)-5-[(5-phosphoribosylamino)methylideneamino] imidazole-4-carboxamide isomerase (248 aa).

The active-site Proton acceptor is D8. The active-site Proton donor is the D129.

Belongs to the HisA/HisF family.

It localises to the cytoplasm. It catalyses the reaction 1-(5-phospho-beta-D-ribosyl)-5-[(5-phospho-beta-D-ribosylamino)methylideneamino]imidazole-4-carboxamide = 5-[(5-phospho-1-deoxy-D-ribulos-1-ylimino)methylamino]-1-(5-phospho-beta-D-ribosyl)imidazole-4-carboxamide. It functions in the pathway amino-acid biosynthesis; L-histidine biosynthesis; L-histidine from 5-phospho-alpha-D-ribose 1-diphosphate: step 4/9. The polypeptide is 1-(5-phosphoribosyl)-5-[(5-phosphoribosylamino)methylideneamino] imidazole-4-carboxamide isomerase (Sinorhizobium medicae (strain WSM419) (Ensifer medicae)).